The following is a 292-amino-acid chain: RNA-binding P34 protein (292 aa).

Residues 29–46 (CAIYTVACRILFLSVGFM) traverse the membrane as a helical segment. An RNA-binding region spans residues 219-292 (EGFKSPQVEY…NFKAKNKNNE (74 aa)).

Its subcellular location is the host endoplasmic reticulum membrane. Its function is as follows. Acts as a ssRNA-binding protein that may be involved in targeting RNA2 to replication sites or facilitating RNA2 replication. This chain is RNA-binding P34 protein, found in Lettuce infectious yellows virus (isolate United States/92) (LIYV).